A 65-amino-acid polypeptide reads, in one-letter code: Toxin Cbo5 (65 aa).

In terms of domain architecture, LCN-type CS-alpha/beta spans 2–65 (KDGYLVDKTG…QTWPLPNKSC (64 aa)). 4 cysteine pairs are disulfide-bonded: cysteine 12–cysteine 65, cysteine 16–cysteine 41, cysteine 25–cysteine 46, and cysteine 29–cysteine 48.

This sequence belongs to the long (4 C-C) scorpion toxin superfamily. Sodium channel inhibitor family. Beta subfamily. As to expression, expressed by the venom gland.

It localises to the secreted. In terms of biological role, a probable toxin that has no activity on the tested sodium channels (when tested at 200 nM) and is not toxic to mice, crickets or sweet water shrimps. It resembles Beta toxins that bind voltage-independently at site-4 of sodium channels and shift the voltage of activation toward more negative potentials, thereby affecting sodium channel activation and promoting spontaneous and repetitive firing. This is Toxin Cbo5 from Centruroides bonito (Scorpion).